The following is a 265-amino-acid chain: MAAESAPVGVFDSGVGGLSVLREIRARLPAESLLYVADNAHVPYGEKSAEYIRERCERIGDFLLERGAKALVLACNTATAAAAAELRERYPQVPLVAMEPAVKPAAAATRNGRVGVLATTGTLKSARFAALLDRFASDVQVFTQPCPGLVERIEAGDLHGARTRALLERLLGPILEQGCDTLILGCTHYPFVKPLLAELIPADIAVIDTGAAVARQLERVLSTRALLASGQAAAPRFWTSALPEEMERILPILWGSQESVGKLDV.

Residues 12-13 (DS) and 44-45 (YG) each bind substrate. C75 (proton donor/acceptor) is an active-site residue. A substrate-binding site is contributed by 76–77 (NT). C186 functions as the Proton donor/acceptor in the catalytic mechanism. 187–188 (TH) provides a ligand contact to substrate.

Belongs to the aspartate/glutamate racemases family.

The enzyme catalyses L-glutamate = D-glutamate. The protein operates within cell wall biogenesis; peptidoglycan biosynthesis. Functionally, provides the (R)-glutamate required for cell wall biosynthesis. The chain is Glutamate racemase from Pseudomonas paraeruginosa (strain DSM 24068 / PA7) (Pseudomonas aeruginosa (strain PA7)).